We begin with the raw amino-acid sequence, 638 residues long: Phenylethylamine oxidase (638 aa).

The propeptide occupies 1 to 2; sequence MT. Substrate is bound at residue 296 to 307; the sequence is YFDTGEYLVGQY. D298 serves as the catalytic Proton acceptor. An intrachain disulfide couples C317 to C343. 379-384 is a binding site for substrate; the sequence is IGNYDY. The active-site Schiff-base intermediate with substrate; via topaquinone is Y382. A 2',4',5'-topaquinone modification is found at Y382. Residues H431, H433, and H592 each contribute to the Cu cation site.

The protein belongs to the copper/topaquinone oxidase family. In terms of assembly, homodimer. Requires Cu cation as cofactor. The cofactor is L-topaquinone. Post-translationally, topaquinone (TPQ) is generated by copper-dependent autoxidation of a specific tyrosyl residue.

The catalysed reaction is a primary methyl amine + O2 + H2O = an aldehyde + H2O2 + NH4(+). The enzyme catalyses 2-phenylethylamine + O2 + H2O = 2-phenylacetaldehyde + H2O2 + NH4(+). Functionally, catalyzes the oxidative deamination of phenylethylamine to phenylacetaldehyde with the concomitant production of hydrogen peroxide and ammonia. This Arthrobacter globiformis protein is Phenylethylamine oxidase.